The sequence spans 118 residues: Large ribosomal subunit protein bL19 (118 aa).

It belongs to the bacterial ribosomal protein bL19 family.

Its function is as follows. This protein is located at the 30S-50S ribosomal subunit interface and may play a role in the structure and function of the aminoacyl-tRNA binding site. The protein is Large ribosomal subunit protein bL19 of Dictyoglomus turgidum (strain DSM 6724 / Z-1310).